The chain runs to 120 residues: NAD(P)H-quinone oxidoreductase subunit 3, chloroplastic (120 aa).

A run of 3 helical transmembrane segments spans residues 9-29 (IFWAFLIISSVIPILAFLISG), 64-84 (MFALVFVVFDVETVFLYPWAM), and 88-108 (VLGVSVFIEALIFVLIPIVGS).

Belongs to the complex I subunit 3 family. NDH is composed of at least 16 different subunits, 5 of which are encoded in the nucleus.

It is found in the plastid. It localises to the chloroplast thylakoid membrane. The catalysed reaction is a plastoquinone + NADH + (n+1) H(+)(in) = a plastoquinol + NAD(+) + n H(+)(out). It catalyses the reaction a plastoquinone + NADPH + (n+1) H(+)(in) = a plastoquinol + NADP(+) + n H(+)(out). NDH shuttles electrons from NAD(P)H:plastoquinone, via FMN and iron-sulfur (Fe-S) centers, to quinones in the photosynthetic chain and possibly in a chloroplast respiratory chain. The immediate electron acceptor for the enzyme in this species is believed to be plastoquinone. Couples the redox reaction to proton translocation, and thus conserves the redox energy in a proton gradient. The sequence is that of NAD(P)H-quinone oxidoreductase subunit 3, chloroplastic from Calycanthus floridus var. glaucus (Eastern sweetshrub).